Reading from the N-terminus, the 577-residue chain is Proline--tRNA ligase (577 aa).

It belongs to the class-II aminoacyl-tRNA synthetase family. ProS type 1 subfamily. In terms of assembly, homodimer.

The protein resides in the cytoplasm. It carries out the reaction tRNA(Pro) + L-proline + ATP = L-prolyl-tRNA(Pro) + AMP + diphosphate. Its function is as follows. Catalyzes the attachment of proline to tRNA(Pro) in a two-step reaction: proline is first activated by ATP to form Pro-AMP and then transferred to the acceptor end of tRNA(Pro). As ProRS can inadvertently accommodate and process non-cognate amino acids such as alanine and cysteine, to avoid such errors it has two additional distinct editing activities against alanine. One activity is designated as 'pretransfer' editing and involves the tRNA(Pro)-independent hydrolysis of activated Ala-AMP. The other activity is designated 'posttransfer' editing and involves deacylation of mischarged Ala-tRNA(Pro). The misacylated Cys-tRNA(Pro) is not edited by ProRS. The protein is Proline--tRNA ligase of Chlamydia caviae (strain ATCC VR-813 / DSM 19441 / 03DC25 / GPIC) (Chlamydophila caviae).